A 263-amino-acid polypeptide reads, in one-letter code: RNA exonuclease 4 (263 aa).

A disordered region spans residues M1–P27. The segment covering K17–P27 has biased composition (basic residues). The region spanning Y95–Y247 is the Exonuclease domain.

Belongs to the REXO4 family.

Its subcellular location is the nucleus. Exoribonuclease involved in ribosome biosynthesis. Involved in the processing of ITS1, the internal transcribed spacer localized between the 18S and 5.8S rRNAs. The chain is RNA exonuclease 4 (REX4) from Candida glabrata (strain ATCC 2001 / BCRC 20586 / JCM 3761 / NBRC 0622 / NRRL Y-65 / CBS 138) (Yeast).